The sequence spans 155 residues: Endoribonuclease YbeY (155 aa).

The Zn(2+) site is built by His120, His124, and His130.

It belongs to the endoribonuclease YbeY family. Requires Zn(2+) as cofactor.

The protein resides in the cytoplasm. Single strand-specific metallo-endoribonuclease involved in late-stage 70S ribosome quality control and in maturation of the 3' terminus of the 16S rRNA. In Staphylococcus aureus (strain bovine RF122 / ET3-1), this protein is Endoribonuclease YbeY.